Consider the following 302-residue polypeptide: 33 kDa chaperonin (302 aa).

2 disulfides stabilise this stretch: Cys-234/Cys-236 and Cys-267/Cys-270.

The protein belongs to the HSP33 family. Under oxidizing conditions two disulfide bonds are formed involving the reactive cysteines. Under reducing conditions zinc is bound to the reactive cysteines and the protein is inactive.

Its subcellular location is the cytoplasm. In terms of biological role, redox regulated molecular chaperone. Protects both thermally unfolding and oxidatively damaged proteins from irreversible aggregation. Plays an important role in the bacterial defense system toward oxidative stress. The sequence is that of 33 kDa chaperonin from Neisseria meningitidis serogroup B (strain ATCC BAA-335 / MC58).